A 577-amino-acid polypeptide reads, in one-letter code: Adenine deaminase (577 aa).

The protein belongs to the metallo-dependent hydrolases superfamily. Adenine deaminase family. Mn(2+) serves as cofactor.

The enzyme catalyses adenine + H2O + H(+) = hypoxanthine + NH4(+). This chain is Adenine deaminase, found in Kosmotoga olearia (strain ATCC BAA-1733 / DSM 21960 / TBF 19.5.1).